The following is a 175-amino-acid chain: Adenine phosphoribosyltransferase (175 aa).

It belongs to the purine/pyrimidine phosphoribosyltransferase family. As to quaternary structure, homodimer.

Its subcellular location is the cytoplasm. The enzyme catalyses AMP + diphosphate = 5-phospho-alpha-D-ribose 1-diphosphate + adenine. Its pathway is purine metabolism; AMP biosynthesis via salvage pathway; AMP from adenine: step 1/1. Its function is as follows. Catalyzes a salvage reaction resulting in the formation of AMP, that is energically less costly than de novo synthesis. The polypeptide is Adenine phosphoribosyltransferase (Synechococcus sp. (strain JA-2-3B'a(2-13)) (Cyanobacteria bacterium Yellowstone B-Prime)).